We begin with the raw amino-acid sequence, 138 residues long: uncharacterized protein (138 aa).

This is an uncharacterized protein from Thiocystis violacea.